Here is a 227-residue protein sequence, read N- to C-terminus: Cytochrome c oxidase subunit 2 (227 aa).

The Mitochondrial intermembrane portion of the chain corresponds to 1–14 (MAYPMQLGFQDATS). The helical transmembrane segment at 15–45 (PIMEELLHFHDHTLMIVFLISSLVLYIISLM) threads the bilayer. The Mitochondrial matrix segment spans residues 46–59 (LTTKLTHTSTMDAQ). The helical transmembrane segment at 60–87 (EVETIWTILPAIILIMIALPSLRILYMM) threads the bilayer. Residues 88 to 227 (DEINNPSLTV…YFEKWSASML (140 aa)) lie on the Mitochondrial intermembrane side of the membrane. The Cu cation site is built by C196, E198, C200, H204, and M207. E198 contacts Mg(2+). Y218 bears the Phosphotyrosine mark.

This sequence belongs to the cytochrome c oxidase subunit 2 family. As to quaternary structure, component of the cytochrome c oxidase (complex IV, CIV), a multisubunit enzyme composed of 14 subunits. The complex is composed of a catalytic core of 3 subunits MT-CO1, MT-CO2 and MT-CO3, encoded in the mitochondrial DNA, and 11 supernumerary subunits COX4I, COX5A, COX5B, COX6A, COX6B, COX6C, COX7A, COX7B, COX7C, COX8 and NDUFA4, which are encoded in the nuclear genome. The complex exists as a monomer or a dimer and forms supercomplexes (SCs) in the inner mitochondrial membrane with NADH-ubiquinone oxidoreductase (complex I, CI) and ubiquinol-cytochrome c oxidoreductase (cytochrome b-c1 complex, complex III, CIII), resulting in different assemblies (supercomplex SCI(1)III(2)IV(1) and megacomplex MCI(2)III(2)IV(2)). Found in a complex with TMEM177, COA6, COX18, COX20, SCO1 and SCO2. Interacts with TMEM177 in a COX20-dependent manner. Interacts with COX20. Interacts with COX16. It depends on Cu cation as a cofactor.

The protein localises to the mitochondrion inner membrane. The catalysed reaction is 4 Fe(II)-[cytochrome c] + O2 + 8 H(+)(in) = 4 Fe(III)-[cytochrome c] + 2 H2O + 4 H(+)(out). Its function is as follows. Component of the cytochrome c oxidase, the last enzyme in the mitochondrial electron transport chain which drives oxidative phosphorylation. The respiratory chain contains 3 multisubunit complexes succinate dehydrogenase (complex II, CII), ubiquinol-cytochrome c oxidoreductase (cytochrome b-c1 complex, complex III, CIII) and cytochrome c oxidase (complex IV, CIV), that cooperate to transfer electrons derived from NADH and succinate to molecular oxygen, creating an electrochemical gradient over the inner membrane that drives transmembrane transport and the ATP synthase. Cytochrome c oxidase is the component of the respiratory chain that catalyzes the reduction of oxygen to water. Electrons originating from reduced cytochrome c in the intermembrane space (IMS) are transferred via the dinuclear copper A center (CU(A)) of subunit 2 and heme A of subunit 1 to the active site in subunit 1, a binuclear center (BNC) formed by heme A3 and copper B (CU(B)). The BNC reduces molecular oxygen to 2 water molecules using 4 electrons from cytochrome c in the IMS and 4 protons from the mitochondrial matrix. In Ovis aries (Sheep), this protein is Cytochrome c oxidase subunit 2 (MT-CO2).